Reading from the N-terminus, the 346-residue chain is Archaeosine synthase subunit beta (346 aa).

The Radical SAM core domain maps to 36–276 (GVQTKTLTVI…LRQAKAAHPE (241 aa)). Cys-51, Cys-59, and Cys-62 together coordinate [4Fe-4S] cluster.

It belongs to the radical SAM superfamily. RaSEA family. Forms a robust complex with the archaeosine synthase alpha subunit ArcS. This complex likely consists of an alpha(2)beta(2) heterotetrameric structure. Requires [4Fe-4S] cluster as cofactor.

The enzyme catalyses 7-N-[(5S)-5-amino-5-carboxypentyl]formamidino-7-deazaguanosine(15) in tRNA + S-adenosyl-L-methionine = archaeosine(15) in tRNA + L-1-piperideine-6-carboxylate + 5'-deoxyadenosine + L-methionine + 2 H(+). The protein operates within tRNA modification; archaeosine-tRNA biosynthesis. In terms of biological role, radical SAM enzyme involved in the synthesis of archaeosine, a modified nucleoside present in the dihydrouridine loop (D-loop) of archaeal tRNAs. Catalyzes the cleavage of the C(epsilon)-N bond of the lysine moiety of q0kN15-tRNA, leading to the formation of archaeosine at position 15 in tRNAs. In Methanosarcina acetivorans (strain ATCC 35395 / DSM 2834 / JCM 12185 / C2A), this protein is Archaeosine synthase subunit beta.